A 239-amino-acid chain; its full sequence is Fatty acid metabolism regulator protein (239 aa).

In terms of domain architecture, HTH gntR-type spans 6–74; that stretch reads QSPAGFAEEY…HGKPTKVNNF (69 aa). Residues 34–53 constitute a DNA-binding region (H-T-H motif); it reads ERELSELIGVTRTTLREVLQ.

Homodimer.

The protein localises to the cytoplasm. Functionally, multifunctional regulator of fatty acid metabolism. The polypeptide is Fatty acid metabolism regulator protein (Escherichia fergusonii (strain ATCC 35469 / DSM 13698 / CCUG 18766 / IAM 14443 / JCM 21226 / LMG 7866 / NBRC 102419 / NCTC 12128 / CDC 0568-73)).